The chain runs to 324 residues: tRNA pseudouridine synthase B (324 aa).

Residue His43 coordinates substrate. Asp48 serves as the catalytic Nucleophile. Substrate-binding residues include Tyr76, Tyr179, and Leu200.

The protein belongs to the pseudouridine synthase TruB family. Type 1 subfamily.

The enzyme catalyses uridine(55) in tRNA = pseudouridine(55) in tRNA. Functionally, responsible for synthesis of pseudouridine from uracil-55 in the psi GC loop of transfer RNAs. The sequence is that of tRNA pseudouridine synthase B from Yersinia pestis bv. Antiqua (strain Nepal516).